The following is a 160-amino-acid chain: NADH-quinone oxidoreductase subunit B (160 aa).

4 residues coordinate [4Fe-4S] cluster: Cys37, Cys38, Cys102, and Cys132.

This sequence belongs to the complex I 20 kDa subunit family. In terms of assembly, NDH-1 is composed of 14 different subunits. Subunits NuoB, C, D, E, F, and G constitute the peripheral sector of the complex. [4Fe-4S] cluster is required as a cofactor.

The protein resides in the cell inner membrane. It catalyses the reaction a quinone + NADH + 5 H(+)(in) = a quinol + NAD(+) + 4 H(+)(out). NDH-1 shuttles electrons from NADH, via FMN and iron-sulfur (Fe-S) centers, to quinones in the respiratory chain. Couples the redox reaction to proton translocation (for every two electrons transferred, four hydrogen ions are translocated across the cytoplasmic membrane), and thus conserves the redox energy in a proton gradient. This is NADH-quinone oxidoreductase subunit B from Neisseria gonorrhoeae (strain ATCC 700825 / FA 1090).